A 314-amino-acid chain; its full sequence is CBASS oligonucleotide cyclase CdnC (314 aa).

Lysine 60 contacts ATP. Residues aspartate 73 and aspartate 75 each coordinate Mg(2+). ATP-binding positions include aspartate 75, lysine 186, 197 to 199 (KSF), and asparagine 263.

This sequence belongs to the CD-NTase family. C01 subfamily. In terms of assembly, forms complexes with Cap7 with 1:1 and 2:2 stoichimetry, and a 1:1:6 CdnC:Cap7:Cap6 complex. It depends on Mg(2+) as a cofactor.

Functionally, cyclic nucleotide synthase (second messenger synthase) of a CBASS antivirus system. CBASS (cyclic oligonucleotide-based antiphage signaling system) provides immunity against bacteriophage. The CD-NTase protein synthesizes cyclic nucleotides in response to infection; these serve as specific second messenger signals. The signals activate a diverse range of effectors, leading to bacterial cell death and thus abortive phage infection. A type III CBASS system. Expression of this CBASS system (Cap18-Cap6-Cap7-CdnC-CapW-Cap17) in a susceptible E.coli (strain MG1655) confers resistance to bacteriophage P1. Probable cyclic nucleotide synthase that upon activation catalyzes the synthesis of a cyclic nucleotide. A cyclase activity for this enzyme was not identified in. This Escherichia coli (strain KTE188) protein is CBASS oligonucleotide cyclase CdnC.